The primary structure comprises 397 residues: Tryptophan synthase beta chain (397 aa).

Lys-88 is modified (N6-(pyridoxal phosphate)lysine).

Belongs to the TrpB family. In terms of assembly, tetramer of two alpha and two beta chains. Pyridoxal 5'-phosphate serves as cofactor.

The enzyme catalyses (1S,2R)-1-C-(indol-3-yl)glycerol 3-phosphate + L-serine = D-glyceraldehyde 3-phosphate + L-tryptophan + H2O. It participates in amino-acid biosynthesis; L-tryptophan biosynthesis; L-tryptophan from chorismate: step 5/5. In terms of biological role, the beta subunit is responsible for the synthesis of L-tryptophan from indole and L-serine. This chain is Tryptophan synthase beta chain, found in Haemophilus influenzae (strain 86-028NP).